The sequence spans 533 residues: Apolipoprotein N-acyltransferase (533 aa).

The next 5 membrane-spanning stretches (helical) occupy residues 17 to 37, 72 to 92, 116 to 136, 165 to 185, and 190 to 210; these read FFLPLLSGLLLGISFPTWPAV, LLFCLIALWWVCLATFVGGIL, GFRSALLALPFIWTGWEWAYM, GVWGVSFWLLTFNVLVLLLFM, and FQVKVGIVMVMLVMIATPLLY. In terms of domain architecture, CN hydrolase spans 232–499; that stretch reads VQPDIDPHEK…QSVLTADVPL (268 aa). The active-site Proton acceptor is the E274. K352 is an active-site residue. Catalysis depends on C410, which acts as the Nucleophile. A helical transmembrane segment spans residues 510–530; that stretch reads PDLVPHVCLGIAGVLALVAAV.

This sequence belongs to the CN hydrolase family. Apolipoprotein N-acyltransferase subfamily.

It is found in the cell inner membrane. It catalyses the reaction N-terminal S-1,2-diacyl-sn-glyceryl-L-cysteinyl-[lipoprotein] + a glycerophospholipid = N-acyl-S-1,2-diacyl-sn-glyceryl-L-cysteinyl-[lipoprotein] + a 2-acyl-sn-glycero-3-phospholipid + H(+). Its pathway is protein modification; lipoprotein biosynthesis (N-acyl transfer). Functionally, catalyzes the phospholipid dependent N-acylation of the N-terminal cysteine of apolipoprotein, the last step in lipoprotein maturation. The polypeptide is Apolipoprotein N-acyltransferase (Chlorobaculum tepidum (strain ATCC 49652 / DSM 12025 / NBRC 103806 / TLS) (Chlorobium tepidum)).